The sequence spans 608 residues: UvrABC system protein C (608 aa).

Residues 13-91 (HDPGVYRMFD…IKTFQPRYNV (79 aa)) enclose the GIY-YIG domain. The region spanning 201–236 (QQVLDHLIAKMETASRALDFENAARFRDQIQAVRAV) is the UVR domain.

The protein belongs to the UvrC family. Interacts with UvrB in an incision complex.

The protein resides in the cytoplasm. Its function is as follows. The UvrABC repair system catalyzes the recognition and processing of DNA lesions. UvrC both incises the 5' and 3' sides of the lesion. The N-terminal half is responsible for the 3' incision and the C-terminal half is responsible for the 5' incision. In Actinobacillus succinogenes (strain ATCC 55618 / DSM 22257 / CCUG 43843 / 130Z), this protein is UvrABC system protein C.